The chain runs to 41 residues: Large ribosomal subunit protein bL36 (41 aa).

The protein belongs to the bacterial ribosomal protein bL36 family.

The polypeptide is Large ribosomal subunit protein bL36 (Dinoroseobacter shibae (strain DSM 16493 / NCIMB 14021 / DFL 12)).